A 35-amino-acid chain; its full sequence is Photosystem II reaction center protein M (35 aa).

An N-formylmethionine modification is found at Met1. Residues 7 to 28 form a helical membrane-spanning segment; it reads GFIASILFVLVPTVFLLILFIQ.

This sequence belongs to the PsbM family. PSII is composed of 1 copy each of membrane proteins PsbA, PsbB, PsbC, PsbD, PsbE, PsbF, PsbH, PsbI, PsbJ, PsbK, PsbL, PsbM, PsbT, PsbX, PsbY, PsbZ, Psb30/Ycf12, peripheral proteins PsbO, CyanoQ (PsbQ), PsbU, PsbV and a large number of cofactors. It forms dimeric complexes.

Its subcellular location is the cellular thylakoid membrane. In terms of biological role, one of the components of the core complex of photosystem II (PSII). PSII is a light-driven water:plastoquinone oxidoreductase that uses light energy to abstract electrons from H(2)O, generating O(2) and a proton gradient subsequently used for ATP formation. It consists of a core antenna complex that captures photons, and an electron transfer chain that converts photonic excitation into a charge separation. This subunit is found at the monomer-monomer interface. Involved in assembly of monomeric PSII from the CP43-less intermediate. This chain is Photosystem II reaction center protein M, found in Synechocystis sp. (strain ATCC 27184 / PCC 6803 / Kazusa).